The sequence spans 252 residues: Phosphate import ATP-binding protein PstB 2 (252 aa).

An ABC transporter domain is found at 6-247 (ISINDLSVYF…PQHKETEDYI (242 aa)). Residue 38-45 (GPSGSGKS) participates in ATP binding.

It belongs to the ABC transporter superfamily. Phosphate importer (TC 3.A.1.7) family. As to quaternary structure, the complex is composed of two ATP-binding proteins (PstB), two transmembrane proteins (PstC and PstA) and a solute-binding protein (PstS).

It localises to the cell membrane. The catalysed reaction is phosphate(out) + ATP + H2O = ADP + 2 phosphate(in) + H(+). Its function is as follows. Part of the ABC transporter complex PstSACB involved in phosphate import. Responsible for energy coupling to the transport system. The protein is Phosphate import ATP-binding protein PstB 2 of Streptococcus thermophilus (strain CNRZ 1066).